The primary structure comprises 425 residues: Putative nucleoside transporter YegT (425 aa).

Over Met-1–Ser-8 the chain is Periplasmic. The chain crosses the membrane as a helical span at residues Phe-9–Leu-29. Over Ser-30–Glu-38 the chain is Cytoplasmic. A helical transmembrane segment spans residues Ile-39–Ser-59. Residues Ile-60–Arg-63 are Periplasmic-facing. The helical transmembrane segment at Phe-64–Phe-84 threads the bilayer. Over Ala-85 to Thr-90 the chain is Cytoplasmic. Residues Phe-91 to Leu-111 traverse the membrane as a helical segment. At Thr-112–Arg-131 the chain is on the periplasmic side. A helical transmembrane segment spans residues Val-132–Leu-152. Over Gly-153–Asn-161 the chain is Cytoplasmic. The chain crosses the membrane as a helical span at residues Ile-162–Pro-182. Over Asp-183 to Asn-210 the chain is Periplasmic. A helical transmembrane segment spans residues Phe-211–Phe-231. At Ala-232 to Ala-244 the chain is on the cytoplasmic side. Residues Thr-245–Phe-265 traverse the membrane as a helical segment. The Periplasmic segment spans residues Thr-266–Gly-287. The chain crosses the membrane as a helical span at residues Phe-288–Leu-308. At Leu-309–Gly-339 the chain is on the cytoplasmic side. A helical membrane pass occupies residues Leu-340 to Met-360. Over Met-361–Ser-379 the chain is Periplasmic. A helical membrane pass occupies residues Gly-380 to Phe-400. The Cytoplasmic segment spans residues Arg-401 to Lys-425.

This sequence belongs to the major facilitator superfamily. Nucleoside:H(+) symporter (NHS) (TC 2.A.1.10) family.

The protein localises to the cell inner membrane. Its function is as follows. Could be involved in nucleoside transport. The sequence is that of Putative nucleoside transporter YegT (yegT) from Escherichia coli (strain K12).